The primary structure comprises 276 residues: Diaminopimelate epimerase (276 aa).

The substrate site is built by Asn-13, Gln-46, and Asn-66. Residue Cys-75 is the Proton donor of the active site. Substrate is bound by residues 76-77, Asn-159, Asn-192, and 210-211; these read GN and ER. The active-site Proton acceptor is the Cys-219. 220 to 221 contributes to the substrate binding site; sequence GT.

This sequence belongs to the diaminopimelate epimerase family. As to quaternary structure, homodimer.

The protein localises to the cytoplasm. The catalysed reaction is (2S,6S)-2,6-diaminopimelate = meso-2,6-diaminopimelate. Its pathway is amino-acid biosynthesis; L-lysine biosynthesis via DAP pathway; DL-2,6-diaminopimelate from LL-2,6-diaminopimelate: step 1/1. In terms of biological role, catalyzes the stereoinversion of LL-2,6-diaminopimelate (L,L-DAP) to meso-diaminopimelate (meso-DAP), a precursor of L-lysine and an essential component of the bacterial peptidoglycan. The polypeptide is Diaminopimelate epimerase (Pseudoalteromonas translucida (strain TAC 125)).